A 272-amino-acid polypeptide reads, in one-letter code: tRNA pseudouridine synthase B (272 aa).

Asp38 (nucleophile) is an active-site residue.

Belongs to the pseudouridine synthase TruB family. Type 1 subfamily.

The enzyme catalyses uridine(55) in tRNA = pseudouridine(55) in tRNA. In terms of biological role, responsible for synthesis of pseudouridine from uracil-55 in the psi GC loop of transfer RNAs. The sequence is that of tRNA pseudouridine synthase B from Campylobacter jejuni subsp. jejuni serotype O:23/36 (strain 81-176).